We begin with the raw amino-acid sequence, 421 residues long: ATP-dependent RNA helicase RhlB (421 aa).

The Q motif motif lies at 9–37 (QKFSDFALHPAVIEALEKKGFHNCTPIQA). Positions 40–219 (LPLTLEGRDV…FEQMNNAEYV (180 aa)) constitute a Helicase ATP-binding domain. 53–60 (AQTGTGKT) contacts ATP. Positions 165 to 168 (DEAD) match the DEAD box motif. One can recognise a Helicase C-terminal domain in the interval 245 to 390 (RLLQTLLEEE…VSKYNPDALM (146 aa)). Residues 396 to 421 (PLRLTRARPGNGPRRNGPPRNRRRSG) form a disordered region. A compositionally biased stretch (low complexity) spans 403–414 (RPGNGPRRNGPP).

This sequence belongs to the DEAD box helicase family. RhlB subfamily. As to quaternary structure, component of the RNA degradosome, which is a multiprotein complex involved in RNA processing and mRNA degradation.

Its subcellular location is the cytoplasm. The catalysed reaction is ATP + H2O = ADP + phosphate + H(+). DEAD-box RNA helicase involved in RNA degradation. Has RNA-dependent ATPase activity and unwinds double-stranded RNA. The chain is ATP-dependent RNA helicase RhlB from Klebsiella pneumoniae (strain 342).